A 174-amino-acid chain; its full sequence is NADH-quinone oxidoreductase subunit B 2 (174 aa).

4 residues coordinate [4Fe-4S] cluster: Cys51, Cys52, Cys116, and Cys145.

This sequence belongs to the complex I 20 kDa subunit family. NDH-1 is composed of 14 different subunits. Subunits NuoB, C, D, E, F, and G constitute the peripheral sector of the complex. It depends on [4Fe-4S] cluster as a cofactor.

It is found in the cell inner membrane. The enzyme catalyses a quinone + NADH + 5 H(+)(in) = a quinol + NAD(+) + 4 H(+)(out). Functionally, NDH-1 shuttles electrons from NADH, via FMN and iron-sulfur (Fe-S) centers, to quinones in the respiratory chain. The immediate electron acceptor for the enzyme in this species is believed to be ubiquinone. Couples the redox reaction to proton translocation (for every two electrons transferred, four hydrogen ions are translocated across the cytoplasmic membrane), and thus conserves the redox energy in a proton gradient. The sequence is that of NADH-quinone oxidoreductase subunit B 2 from Thermodesulfovibrio yellowstonii (strain ATCC 51303 / DSM 11347 / YP87).